Here is a 35-residue protein sequence, read N- to C-terminus: Photosystem II reaction center protein T (35 aa).

A helical transmembrane segment spans residues 3 to 23 (ALVYTFLLISTLGIIFFAIFF).

Belongs to the PsbT family. In terms of assembly, PSII is composed of 1 copy each of membrane proteins PsbA, PsbB, PsbC, PsbD, PsbE, PsbF, PsbH, PsbI, PsbJ, PsbK, PsbL, PsbM, PsbT, PsbY, PsbZ, Psb30/Ycf12, at least 3 peripheral proteins of the oxygen-evolving complex and a large number of cofactors. It forms dimeric complexes.

It is found in the plastid. The protein resides in the chloroplast thylakoid membrane. In terms of biological role, found at the monomer-monomer interface of the photosystem II (PS II) dimer, plays a role in assembly and dimerization of PSII. PSII is a light-driven water plastoquinone oxidoreductase, using light energy to abstract electrons from H(2)O, generating a proton gradient subsequently used for ATP formation. This chain is Photosystem II reaction center protein T, found in Aristolochia macrophylla (Dutchman's pipe vine).